We begin with the raw amino-acid sequence, 121 residues long: LHHQIIPVLSQQQTPTHALQPHHHIPVMAAQQPMQPQQPMMPMPGQPSVTPTQHHQSNLPQPAQQPFQPQVPQQPPHQPIQPQAPAHPMPPMPQPPLPPMFPMQPLPPLLPDLPLEQWPAT.

Disordered stretches follow at residues leucine 1–glutamine 20 and glutamine 32–threonine 121. A compositionally biased stretch (polar residues) spans serine 48–asparagine 58. Low complexity predominate over residues leucine 59–valine 71. Residues proline 85 to proline 111 show a composition bias toward pro residues.

The protein belongs to the amelogenin family.

It is found in the secreted. Its subcellular location is the extracellular space. The protein localises to the extracellular matrix. In terms of biological role, plays a role in the biomineralization of teeth. Seems to regulate the formation of crystallites during the secretory stage of tooth enamel development. Thought to play a major role in the structural organization and mineralization of developing enamel. In Ornithorhynchus anatinus (Duckbill platypus), this protein is Amelogenin (AMEL).